Reading from the N-terminus, the 682-residue chain is Guanylate cyclase soluble subunit beta-2 (682 aa).

His43 lines the heme pocket. In terms of domain architecture, Guanylate cyclase spans 408–536; it reads TILFSDVVTF…DTVNTASRME (129 aa). Residues 592-667 form a disordered region; it reads MGRPSAPADG…QPSPDETKTS (76 aa). The span at 649 to 667 shows a compositional bias: polar residues; that stretch reads RNSTDAVNNQPSPDETKTS.

Belongs to the adenylyl cyclase class-4/guanylyl cyclase family. In terms of assembly, heterodimer of an alpha and a beta chain. The cofactor is heme. In terms of tissue distribution, kidney and liver.

It is found in the cytoplasm. It carries out the reaction GTP = 3',5'-cyclic GMP + diphosphate. With respect to regulation, activated by nitric oxide in the presence of magnesium or manganese ions. This is Guanylate cyclase soluble subunit beta-2 (Gucy1b2) from Rattus norvegicus (Rat).